The chain runs to 550 residues: ATP-dependent RNA helicase MSS116, mitochondrial (550 aa).

Positions 1-11 (MPPPPKRKWPN) are enriched in basic residues. A mitochondrion-targeting transit peptide spans 1-41 (MPPPPKRKWPNRPRGGGGANGSASGTPTTPRSTVAQQPKRP). Residues 1-51 (MPPPPKRKWPNRPRGGGGANGSASGTPTTPRSTVAQQPKRPKVEDAAPAAE) are disordered. Residues 71–99 (FSELSSVLDKSLLDGLDKMGFEFMSPVQQ) carry the Q motif motif. Residues 103 to 285 (TELPSLSSDC…KIVLFPGFTH (183 aa)) form the Helicase ATP-binding domain. 116 to 123 (AKTGTGKT) is a binding site for ATP. The DEAD box motif lies at 230-233 (DEAD). Positions 316–472 (ALSALIQEEH…KVPEQEAAIT (157 aa)) constitute a Helicase C-terminal domain.

Belongs to the DEAD box helicase family. DDX18/HAS1 subfamily.

The protein localises to the mitochondrion matrix. It carries out the reaction ATP + H2O = ADP + phosphate + H(+). In terms of biological role, ATP-dependent RNA helicase required for mitochondrial splicing of group I and II introns. Also required for efficient mitochondrial translation. This is ATP-dependent RNA helicase MSS116, mitochondrial (MSS116) from Phaeosphaeria nodorum (strain SN15 / ATCC MYA-4574 / FGSC 10173) (Glume blotch fungus).